The chain runs to 60 residues: MPFVRIDLFEGRTLEQKKALAKEVTEAVVRNTGAPQSAVHVIINDMPEGTYFPQGEMRTK.

The active-site Proton acceptor; via imino nitrogen is proline 2.

It belongs to the 4-oxalocrotonate tautomerase family.

The chain is Probable tautomerase SP_1017 from Streptococcus pneumoniae serotype 4 (strain ATCC BAA-334 / TIGR4).